The primary structure comprises 362 residues: Probable dual-specificity RNA methyltransferase RlmN (362 aa).

Residue glutamate 105 is the Proton acceptor of the active site. The region spanning 111-344 (HEYGNSICVT…VTIRREQGHD (234 aa)) is the Radical SAM core domain. A disulfide bridge links cysteine 118 with cysteine 349. [4Fe-4S] cluster contacts are provided by cysteine 125, cysteine 129, and cysteine 132. Residues 175-176 (GE), serine 207, 230-232 (SLH), and asparagine 306 contribute to the S-adenosyl-L-methionine site. Catalysis depends on cysteine 349, which acts as the S-methylcysteine intermediate.

Belongs to the radical SAM superfamily. RlmN family. It depends on [4Fe-4S] cluster as a cofactor.

The protein localises to the cytoplasm. It carries out the reaction adenosine(2503) in 23S rRNA + 2 reduced [2Fe-2S]-[ferredoxin] + 2 S-adenosyl-L-methionine = 2-methyladenosine(2503) in 23S rRNA + 5'-deoxyadenosine + L-methionine + 2 oxidized [2Fe-2S]-[ferredoxin] + S-adenosyl-L-homocysteine. It catalyses the reaction adenosine(37) in tRNA + 2 reduced [2Fe-2S]-[ferredoxin] + 2 S-adenosyl-L-methionine = 2-methyladenosine(37) in tRNA + 5'-deoxyadenosine + L-methionine + 2 oxidized [2Fe-2S]-[ferredoxin] + S-adenosyl-L-homocysteine. Its function is as follows. Specifically methylates position 2 of adenine 2503 in 23S rRNA and position 2 of adenine 37 in tRNAs. The chain is Probable dual-specificity RNA methyltransferase RlmN from Bacillus anthracis (strain CDC 684 / NRRL 3495).